A 430-amino-acid polypeptide reads, in one-letter code: Putative golgin subfamily A member 8D (430 aa).

Residues 2 to 217 (EWKLEQSMRE…LTAQLSLMAL (216 aa)) adopt a coiled-coil conformation. 4 disordered regions span residues 138-158 (LREQ…QEER), 217-239 (LPGE…RPMP), 290-331 (PITK…GVAA), and 382-406 (PVQG…QDHQ). The segment covering 222-235 (HGGEHLDSEGEEAP) has biased composition (basic and acidic residues). Gly residues predominate over residues 303–316 (PGGGHHQAGPGQGG).

Belongs to the GOLGA8 family.

The chain is Putative golgin subfamily A member 8D (GOLGA8DP) from Homo sapiens (Human).